Reading from the N-terminus, the 284-residue chain is NAD kinase (284 aa).

The active-site Proton acceptor is the Asp-71. NAD(+)-binding positions include 71-72 (DG), 144-145 (ND), Asp-174, 185-190 (TAYNLS), and Gln-242.

This sequence belongs to the NAD kinase family. A divalent metal cation serves as cofactor.

The protein localises to the cytoplasm. The catalysed reaction is NAD(+) + ATP = ADP + NADP(+) + H(+). In terms of biological role, involved in the regulation of the intracellular balance of NAD and NADP, and is a key enzyme in the biosynthesis of NADP. Catalyzes specifically the phosphorylation on 2'-hydroxyl of the adenosine moiety of NAD to yield NADP. The sequence is that of NAD kinase from Sulfurimonas denitrificans (strain ATCC 33889 / DSM 1251) (Thiomicrospira denitrificans (strain ATCC 33889 / DSM 1251)).